A 734-amino-acid chain; its full sequence is Photosystem I P700 chlorophyll a apoprotein A2 (734 aa).

The next 8 membrane-spanning stretches (helical) occupy residues 46–69 (IFAS…FHVA), 135–158 (LYTG…LHLQ), 175–199 (LNHH…HVAI), 273–291 (MAHH…GHMY), 330–353 (IHFQ…QHMY), 369–395 (AALY…IFFI), 417–439 (AIIS…LYVH), and 517–535 (FLVH…LILV). The [4Fe-4S] cluster site is built by cysteine 559 and cysteine 568. Transmembrane regions (helical) follow at residues 575-596 (AFYL…YWHW) and 643-665 (LSVW…MFLI). Residues histidine 654, methionine 662, and tyrosine 670 each coordinate chlorophyll a. Tryptophan 671 provides a ligand contact to phylloquinone. A helical membrane pass occupies residues 707 to 727 (LVGLAHFSVGYIFTYAAFLIA).

Belongs to the PsaA/PsaB family. In terms of assembly, the PsaA/B heterodimer binds the P700 chlorophyll special pair and subsequent electron acceptors. PSI consists of a core antenna complex that captures photons, and an electron transfer chain that converts photonic excitation into a charge separation. The eukaryotic PSI reaction center is composed of at least 11 subunits. P700 is a chlorophyll a/chlorophyll a' dimer, A0 is one or more chlorophyll a, A1 is one or both phylloquinones and FX is a shared 4Fe-4S iron-sulfur center. serves as cofactor.

Its subcellular location is the plastid. The protein resides in the chloroplast thylakoid membrane. It catalyses the reaction reduced [plastocyanin] + hnu + oxidized [2Fe-2S]-[ferredoxin] = oxidized [plastocyanin] + reduced [2Fe-2S]-[ferredoxin]. Functionally, psaA and PsaB bind P700, the primary electron donor of photosystem I (PSI), as well as the electron acceptors A0, A1 and FX. PSI is a plastocyanin-ferredoxin oxidoreductase, converting photonic excitation into a charge separation, which transfers an electron from the donor P700 chlorophyll pair to the spectroscopically characterized acceptors A0, A1, FX, FA and FB in turn. Oxidized P700 is reduced on the lumenal side of the thylakoid membrane by plastocyanin. The chain is Photosystem I P700 chlorophyll a apoprotein A2 from Arabidopsis thaliana (Mouse-ear cress).